The sequence spans 474 residues: tRNA-2-methylthio-N(6)-dimethylallyladenosine synthase (474 aa).

In terms of domain architecture, MTTase N-terminal spans 3–120 (KKLHIKTWGC…LPEMIDQIRD (118 aa)). [4Fe-4S] cluster-binding residues include Cys12, Cys49, Cys83, Cys157, Cys161, and Cys164. Residues 143–375 (RADGPSAFVS…QDRITQQAMR (233 aa)) enclose the Radical SAM core domain. Positions 378–441 (RQMLGTVQRI…TNSLRGTFVR (64 aa)) constitute a TRAM domain.

It belongs to the methylthiotransferase family. MiaB subfamily. In terms of assembly, monomer. [4Fe-4S] cluster serves as cofactor.

It is found in the cytoplasm. The enzyme catalyses N(6)-dimethylallyladenosine(37) in tRNA + (sulfur carrier)-SH + AH2 + 2 S-adenosyl-L-methionine = 2-methylsulfanyl-N(6)-dimethylallyladenosine(37) in tRNA + (sulfur carrier)-H + 5'-deoxyadenosine + L-methionine + A + S-adenosyl-L-homocysteine + 2 H(+). In terms of biological role, catalyzes the methylthiolation of N6-(dimethylallyl)adenosine (i(6)A), leading to the formation of 2-methylthio-N6-(dimethylallyl)adenosine (ms(2)i(6)A) at position 37 in tRNAs that read codons beginning with uridine. The chain is tRNA-2-methylthio-N(6)-dimethylallyladenosine synthase from Shewanella sediminis (strain HAW-EB3).